Reading from the N-terminus, the 541-residue chain is Man(5)GlcNAc(2)-PP-dolichol translocation protein RFT1 (541 aa).

11 helical membrane passes run 16–36 (SGLL…AFIL), 45–62 (GIVN…TFLA), 85–105 (LLWL…WVWL), 123–143 (VLFF…WVLA), 154–176 (LAES…WLPH), 187–207 (LLYT…LLRS), 335–355 (LALL…QLAL), 376–396 (CLYV…FAAM), 414–434 (SFLV…FIMA), 470–490 (VLLG…AFLC), and 499–519 (LAHI…AFLT).

Belongs to the RFT1 family.

Its subcellular location is the endoplasmic reticulum membrane. The protein operates within protein modification; protein glycosylation. Functionally, intramembrane glycolipid transporter that operates in the biosynthetic pathway of dolichol-linked oligosaccharides, the glycan precursors employed in protein asparagine (N)-glycosylation. The sequential addition of sugars to dolichol pyrophosphate produces dolichol-linked oligosaccharides containing fourteen sugars, including two GlcNAcs, nine mannoses and three glucoses. Once assembled, the oligosaccharide is transferred from the lipid to nascent proteins by oligosaccharyltransferases. The assembly of dolichol-linked oligosaccharides begins on the cytosolic side of the endoplasmic reticulum membrane and finishes in its lumen. RFT1 could mediate the translocation of the cytosolically oriented intermediate DolPP-GlcNAc2Man5, produced by ALG11, into the ER lumen where dolichol-linked oligosaccharides assembly continues. However, the intramembrane lipid transporter activity could not be confirmed in vitro. This is Man(5)GlcNAc(2)-PP-dolichol translocation protein RFT1 from Mus musculus (Mouse).